The following is a 620-amino-acid chain: Nuclear cap-binding protein subunit 3 (620 aa).

Lys-12 is covalently cross-linked (Glycyl lysine isopeptide (Lys-Gly) (interchain with G-Cter in SUMO2)). The span at 15–28 (APAGPALGLPSPEA) shows a compositional bias: low complexity. Residues 15 to 42 (APAGPALGLPSPEAESGVDRGEPEPMEV) form a disordered region. Ser-25 carries the phosphoserine modification. Residue Lys-70 forms a Glycyl lysine isopeptide (Lys-Gly) (interchain with G-Cter in SUMO2) linkage. Ser-73 carries the post-translational modification Phosphoserine. Residues 126 to 187 (ETIYICGVDE…MSSLPAQDKI (62 aa)) form an RNA recognition motif (RRM) domain region. The WLDD motif; essential for 7-methylguanosine-containing mRNA cap binding signature appears at 155–158 (WLDD). Positions 185-198 (DKIRSRDASEDKSA) are enriched in basic and acidic residues. Disordered stretches follow at residues 185–233 (DKIR…LDTL), 332–419 (HSGL…PKKS), and 436–620 (IRNS…EAES). Lys-186 participates in a covalent cross-link: Glycyl lysine isopeptide (Lys-Gly) (interchain with G-Cter in SUMO2). 2 positions are modified to phosphoserine: Ser-209 and Ser-210. 2 stretches are compositionally biased toward acidic residues: residues 209-230 (SSDD…DVEL) and 341-365 (EPIE…DMDA). The span at 366-388 (DDRVVVEYHEELPALKQPRERSA) shows a compositional bias: basic and acidic residues. Thr-413 is modified (phosphothreonine). Ser-415 carries the phosphoserine modification. Composition is skewed to basic and acidic residues over residues 459–474 (PPEK…DEKR) and 511–521 (VRREPSSDVHS). Lys-541 is covalently cross-linked (Glycyl lysine isopeptide (Lys-Gly) (interchain with G-Cter in SUMO2)). 2 stretches are compositionally biased toward basic and acidic residues: residues 554–569 (KTKE…RAPG) and 585–598 (IKEK…KSRL). Over residues 611–620 (ESSSGSEAES) the composition is skewed to low complexity. A Phosphoserine modification is found at Ser-620.

The protein belongs to the NCBP3 family. In terms of assembly, component of an alternative cap-binding complex (CBC) composed of NCBP1/CBP80 and NCBP3. Interacts with SRRT, KPNA3, THOC5 and EIF4A3.

It is found in the nucleus. The protein resides in the cytoplasm. Its function is as follows. Associates with NCBP1/CBP80 to form an alternative cap-binding complex (CBC) which plays a key role in mRNA export. NCBP3 serves as adapter protein linking the capped RNAs (m7GpppG-capped RNA) to NCBP1/CBP80. Unlike the conventional CBC with NCBP2 which binds both small nuclear RNA (snRNA) and messenger (mRNA) and is involved in their export from the nucleus, the alternative CBC with NCBP3 does not bind snRNA and associates only with mRNA thereby playing a role in only mRNA export. The alternative CBC is particularly important in cellular stress situations such as virus infections and the NCBP3 activity is critical to inhibit virus growth. This Homo sapiens (Human) protein is Nuclear cap-binding protein subunit 3.